A 126-amino-acid chain; its full sequence is Large ribosomal subunit protein bL12 (126 aa).

The protein belongs to the bacterial ribosomal protein bL12 family. As to quaternary structure, homodimer. Part of the ribosomal stalk of the 50S ribosomal subunit. Forms a multimeric L10(L12)X complex, where L10 forms an elongated spine to which 2 to 4 L12 dimers bind in a sequential fashion. Binds GTP-bound translation factors.

Its function is as follows. Forms part of the ribosomal stalk which helps the ribosome interact with GTP-bound translation factors. Is thus essential for accurate translation. In Francisella tularensis subsp. mediasiatica (strain FSC147), this protein is Large ribosomal subunit protein bL12.